The chain runs to 306 residues: Putative NylC-analogous protein (306 aa).

Belongs to the peptidase S58 family.

The sequence is that of Putative NylC-analogous protein from Agromyces sp. (strain KY5R).